Consider the following 469-residue polypeptide: Calcium-binding mitochondrial carrier protein SCaMC-2-A (469 aa).

Topologically, residues 1–189 (MLCLCLYVPV…EHLTGMWWRH (189 aa)) are mitochondrial intermembrane. 3 EF-hand domains span residues 47 to 80 (TYRR…QDHE), 78 to 113 (DHEK…LGVH), and 114 to 149 (ISLK…QPAE). Ca(2+) contacts are provided by aspartate 64, glutamine 66, and glutamate 71. Solcar repeat units follow at residues 184-270 (GMWW…IKRV), 278-363 (LGIS…LKNT), and 375-463 (PGVF…IKST). A helical membrane pass occupies residues 190 to 207 (LVSGGGAGAVSRTCTAPL). At 208–244 (DRLKVLMQVHGCQGKSMCLMSGLTQMIKEGGVRSLWR) the chain is on the mitochondrial matrix side. The chain crosses the membrane as a helical span at residues 245 to 264 (GNGINVIKIAPETALKFMAY). At 265 to 287 (EQIKRVMGSSQETLGISERFVAG) the chain is on the mitochondrial intermembrane side. Residues 288 to 301 (SLAGVIAQSTIYPM) traverse the membrane as a helical segment. Over 302-337 (EVLKTRLALRKTGQYKGISDCAKHILKTEGMSAFYK) the chain is Mitochondrial matrix. Residues 338-357 (GYVPNMLGIIPYAGIDLAVY) form a helical membrane-spanning segment. Over 358 to 380 (ETLKNTWLQRYGTENADPGVFVL) the chain is Mitochondrial intermembrane. Residues 381–398 (LACGTVSSTCGQLASYPL) form a helical membrane-spanning segment. At 399–437 (ALIRTRMQAQASVEGSSQVSMTGLFKQIMKTEGPTGLYR) the chain is on the mitochondrial matrix side. A helical membrane pass occupies residues 438–457 (GLTPNFLKVIPAVSISYVVY). The Mitochondrial intermembrane segment spans residues 458 to 469 (EHIKSTLGVRSR).

The protein belongs to the mitochondrial carrier (TC 2.A.29) family.

The protein resides in the mitochondrion inner membrane. In terms of biological role, calcium-dependent mitochondrial solute carrier. In Danio rerio (Zebrafish), this protein is Calcium-binding mitochondrial carrier protein SCaMC-2-A (slc25a25a).